The primary structure comprises 365 residues: Alanine racemase (365 aa).

K32 functions as the Proton acceptor; specific for D-alanine in the catalytic mechanism. N6-(pyridoxal phosphate)lysine is present on K32. R128 is a substrate binding site. Y257 (proton acceptor; specific for L-alanine) is an active-site residue. M305 provides a ligand contact to substrate.

The protein belongs to the alanine racemase family. It depends on pyridoxal 5'-phosphate as a cofactor.

It catalyses the reaction L-alanine = D-alanine. Its pathway is amino-acid biosynthesis; D-alanine biosynthesis; D-alanine from L-alanine: step 1/1. Catalyzes the interconversion of L-alanine and D-alanine. May also act on other amino acids. This chain is Alanine racemase (alr), found in Francisella tularensis subsp. novicida (strain U112).